We begin with the raw amino-acid sequence, 86 residues long: Protein Vpu (86 aa).

The Extracellular portion of the chain corresponds to methionine 1–leucine 12. A helical transmembrane segment spans residues glycine 13 to isoleucine 33. The Cytoplasmic segment spans residues glutamate 34 to leucine 86. Residues serine 58 and serine 62 each carry the phosphoserine; by host CK2 modification.

The protein belongs to the HIV-1 VPU protein family. In terms of assembly, homopentamer. Interacts with host CD4 and BRTC; these interactions induce proteasomal degradation of CD4. Interacts with host BST2; this interaction leads to the degradation of host BST2. Interacts with host FBXW11. Interacts with host AP1M1; this interaction plays a role in the mistrafficking and subsequent degradation of host BST2. Interacts with host RANBP2; this interaction allows Vpu to down-regulate host BLM sumoylation. In terms of processing, phosphorylated by host CK2. This phosphorylation is necessary for interaction with human BTRC and degradation of CD4.

It localises to the host membrane. With respect to regulation, ion channel activity is inhibited by hexamethylene amiloride in vitro. Functionally, enhances virion budding, by targeting human CD4 and Tetherin/BST2 to proteasome degradation. Degradation of CD4 prevents any unwanted premature interactions between viral Env and its host receptor CD4 in the endoplasmic reticulum. Degradation of antiretroviral protein Tetherin/BST2 is important for virion budding, as BST2 tethers new viral particles to the host cell membrane. Mechanistically, Vpu bridges either CD4 or BST2 to BTRC, a substrate recognition subunit of the Skp1/Cullin/F-box protein E3 ubiquitin ligase, induces their ubiquitination and subsequent proteasomal degradation. The alteration of the E3 ligase specificity by Vpu seems to promote the degradation of host IKBKB, leading to NF-kappa-B down-regulation and subsequent apoptosis. Acts as a viroporin that forms an oligomeric ion channel in membranes. Modulates the host DNA repair mechanisms to promote degradation of nuclear viral cDNA in cells that are already productively infected in order to suppress immune sensing and proviral hyper-integration (superinfection). Manipulates PML-NBs and modulates SUMOylation of host BLM protein thereby enhancing its DNA-end processing activity toward viral unintegrated linear DNA. Also inhibits RAD52-mediated homologous repair of viral cDNA, preventing the generation of dead-end circular forms of single copies of the long terminal repeat and permitting sustained nucleolytic attack. In Homo sapiens (Human), this protein is Protein Vpu.